We begin with the raw amino-acid sequence, 138 residues long: Proofreading thioesterase EntH (138 aa).

The active-site Nucleophile or proton acceptor is Glu64.

Belongs to the thioesterase PaaI family. In terms of assembly, homotetramer. Dimer of dimers. Interacts specifically with the aryl carrier protein (ArCP) domain of EntB.

It is found in the cytoplasm. It functions in the pathway siderophore biosynthesis; enterobactin biosynthesis. Its function is as follows. Required for optimal enterobactin synthesis. Acts as a proofreading enzyme that prevents EntB misacylation by hydrolyzing the thioester bound existing between EntB and wrongly charged molecules. The protein is Proofreading thioesterase EntH of Citrobacter rodentium (strain ICC168) (Citrobacter freundii biotype 4280).